Reading from the N-terminus, the 219-residue chain is Small ribosomal subunit protein uS3c (219 aa).

Positions 43 to 118 (IKNYVQKNMK…KLNIAITRIA (76 aa)) constitute a KH type-2 domain.

This sequence belongs to the universal ribosomal protein uS3 family. Part of the 30S ribosomal subunit.

Its subcellular location is the plastid. It is found in the chloroplast. This chain is Small ribosomal subunit protein uS3c (rps3), found in Panax ginseng (Korean ginseng).